Consider the following 186-residue polypeptide: Der GTPase-activating protein YihI (186 aa).

Residues 42-77 (KAREDKKKRKHKGLASGSRHSAVEEKANKLQNEIKD) are disordered. Positions 62–77 (SAVEEKANKLQNEIKD) are enriched in basic and acidic residues.

It belongs to the YihI family. In terms of assembly, interacts with Der.

Its function is as follows. A GTPase-activating protein (GAP) that modifies Der/EngA GTPase function. May play a role in ribosome biogenesis. This Haemophilus influenzae (strain ATCC 51907 / DSM 11121 / KW20 / Rd) protein is Der GTPase-activating protein YihI.